Reading from the N-terminus, the 320-residue chain is Large ribosomal subunit protein uL10y (320 aa).

A disordered region spans residues 289–320; the sequence is AGGGAPAAAKVEEKEESDEEDYGGDFGLFDEE. Acidic residues predominate over residues 302–320; that stretch reads KEESDEEDYGGDFGLFDEE. Position 305 is a phosphoserine (serine 305). Residue tyrosine 310 is modified to Phosphotyrosine.

The protein belongs to the universal ribosomal protein uL10 family. In terms of assembly, P0 forms a pentameric complex by interaction with dimers of P1 and P2.

Its function is as follows. Ribosomal protein P0 is the functional equivalent of E.coli protein L10. The polypeptide is Large ribosomal subunit protein uL10y (RPP0B) (Arabidopsis thaliana (Mouse-ear cress)).